Reading from the N-terminus, the 60-residue chain is Waprin-Lio1 (60 aa).

A signal peptide spans 1-8 (MLLGTTSA). The WAP domain occupies 9 to 59 (QVVRPGSCPNVDVPIPPLGLCRTTCQTDANCQEGRKCCKNGCGFMTCETAR). Intrachain disulfides connect Cys16–Cys46, Cys29–Cys50, Cys33–Cys45, and Cys39–Cys55.

This sequence belongs to the venom waprin family. As to expression, expressed by the venom gland.

It is found in the secreted. Functionally, damages membranes of susceptible bacteria. Has no hemolytic activity. Not toxic to mice. Does not inhibit the proteinases elastase and cathepsin G. The protein is Waprin-Lio1 of Erythrolamprus poecilogyrus (Water snake).